A 324-amino-acid chain; its full sequence is tRNA pseudouridine synthase B (324 aa).

Asp-49 (nucleophile) is an active-site residue.

It belongs to the pseudouridine synthase TruB family. Type 1 subfamily.

It carries out the reaction uridine(55) in tRNA = pseudouridine(55) in tRNA. Responsible for synthesis of pseudouridine from uracil-55 in the psi GC loop of transfer RNAs. This chain is tRNA pseudouridine synthase B, found in Tolumonas auensis (strain DSM 9187 / NBRC 110442 / TA 4).